A 257-amino-acid chain; its full sequence is Pimeloyl-[acyl-carrier protein] methyl ester esterase (257 aa).

The 227-residue stretch at 15–241 (HLVLLHGWGL…KAAHAPFVSH (227 aa)) folds into the AB hydrolase-1 domain. Substrate-binding positions include Trp22, 82–83 (SL), and 143–147 (FLALQ). Ser82 (nucleophile) is an active-site residue. Residues Asp207 and His235 contribute to the active site. Position 235 (His235) interacts with substrate.

Belongs to the AB hydrolase superfamily. Carboxylesterase BioH family. As to quaternary structure, monomer.

The protein resides in the cytoplasm. It carries out the reaction 6-carboxyhexanoyl-[ACP] methyl ester + H2O = 6-carboxyhexanoyl-[ACP] + methanol + H(+). It functions in the pathway cofactor biosynthesis; biotin biosynthesis. The physiological role of BioH is to remove the methyl group introduced by BioC when the pimeloyl moiety is complete. It allows to synthesize pimeloyl-ACP via the fatty acid synthetic pathway through the hydrolysis of the ester bonds of pimeloyl-ACP esters. This chain is Pimeloyl-[acyl-carrier protein] methyl ester esterase, found in Klebsiella pneumoniae (strain 342).